The sequence spans 281 residues: Very-long-chain (3R)-3-hydroxyacyl-CoA dehydratase 1 (281 aa).

The Cytoplasmic segment spans residues 1 to 68 (MGKGDWRQGR…RRLGLLATAW (68 aa)). The chain crosses the membrane as a helical span at residues 69–88 (LTFYNIAMTAGWLVLAIAMV). Topologically, residues 89–107 (RFYMEKGTHRGLYKSIQKT) are lumenal. A helical transmembrane segment spans residues 108–124 (LKFFQTFALLEVVHCLI). Residues 125-134 (GIVPTSVLVT) lie on the Cytoplasmic side of the membrane. A helical membrane pass occupies residues 135–152 (GVQVSSRIFMVWLITHSI). Residues 153–158 (KPIQNE) lie on the Lumenal side of the membrane. The helical transmembrane segment at 159-173 (ESVVLFLVSWTVTEI) threads the bilayer. Residues 174 to 196 (TRYSFYTFSLLDHLPHFIKWARY) lie on the Cytoplasmic side of the membrane. Residues 197–214 (NLFIILYPVGVAGELLTI) form a helical membrane-spanning segment. Active-site residues include Y203 and E210. Topologically, residues 215–244 (YAALPYVKKSGMFSVRLPNKYNVSFDYYYF) are lumenal. N236 carries an N-linked (GlcNAc...) asparagine glycan. A helical membrane pass occupies residues 245–262 (LLITMASYIPLFPQLYFH). At 263-281 (MLRQRRKVLHGEVIAEKDD) the chain is on the cytoplasmic side.

This sequence belongs to the very long-chain fatty acids dehydratase HACD family. As to quaternary structure, may interact with enzymes of the ELO family (including ELOVL1); with those enzymes that mediate condensation, the first of the four steps of the reaction cycle responsible for fatty acids elongation, may be part of a larger fatty acids elongase complex. Interacts with TECR. N-glycosylated. Expressed at high levels in heart, skeletal muscle and testis, weak expression in kidney and liver.

The protein localises to the endoplasmic reticulum membrane. It carries out the reaction a very-long-chain (3R)-3-hydroxyacyl-CoA = a very-long-chain (2E)-enoyl-CoA + H2O. It catalyses the reaction (3R)-hydroxyhexadecanoyl-CoA = (2E)-hexadecenoyl-CoA + H2O. The catalysed reaction is (3R)-hydroxyoctadecanoyl-CoA = (2E)-octadecenoyl-CoA + H2O. The enzyme catalyses (3R)-hydroxyeicosanoyl-CoA = (2E)-eicosenoyl-CoA + H2O. It carries out the reaction (3R)-hydroxydocosanoyl-CoA = (2E)-docosenoyl-CoA + H2O. It catalyses the reaction (3R)-hydroxytetracosanoyl-CoA = (2E)-tetracosenoyl-CoA + H2O. The catalysed reaction is (3R)-hydroxyhexacosanoyl-CoA = (2E)-hexacosenoyl-CoA + H2O. It functions in the pathway lipid metabolism; fatty acid biosynthesis. This chain is Very-long-chain (3R)-3-hydroxyacyl-CoA dehydratase 1, found in Mus musculus (Mouse).